The primary structure comprises 316 residues: Ribose-phosphate pyrophosphokinase (316 aa).

Residues 37 to 39 (DGE) and 96 to 97 (RQ) each bind ATP. The Mg(2+) site is built by His-130 and Asp-171. Residue Lys-194 is part of the active site. D-ribose 5-phosphate contacts are provided by Arg-196 and Asp-221.

Belongs to the ribose-phosphate pyrophosphokinase family. Class I subfamily. As to quaternary structure, homohexamer. The cofactor is Mg(2+).

It localises to the cytoplasm. The catalysed reaction is D-ribose 5-phosphate + ATP = 5-phospho-alpha-D-ribose 1-diphosphate + AMP + H(+). It functions in the pathway metabolic intermediate biosynthesis; 5-phospho-alpha-D-ribose 1-diphosphate biosynthesis; 5-phospho-alpha-D-ribose 1-diphosphate from D-ribose 5-phosphate (route I): step 1/1. Its function is as follows. Involved in the biosynthesis of the central metabolite phospho-alpha-D-ribosyl-1-pyrophosphate (PRPP) via the transfer of pyrophosphoryl group from ATP to 1-hydroxyl of ribose-5-phosphate (Rib-5-P). In Rhodopirellula baltica (strain DSM 10527 / NCIMB 13988 / SH1), this protein is Ribose-phosphate pyrophosphokinase.